A 117-amino-acid chain; its full sequence is Protein Turandot F (117 aa).

The signal sequence occupies residues 1–22 (MKTVILFSFLLVLLGYLGAGHA).

This sequence belongs to the Turandot family.

Its subcellular location is the secreted. In terms of biological role, a humoral factor that may play a role in stress tolerance. The sequence is that of Protein Turandot F from Drosophila sechellia (Fruit fly).